Here is a 145-residue protein sequence, read N- to C-terminus: Basic phospholipase A2 cL038 (145 aa).

Residues 1 to 21 form the signal peptide; it reads MYPAHLLVLLAVCVSLLGASA. The propeptide occupies 22-27; the sequence is IPPLPL. Disulfide bonds link Cys-38–Cys-98, Cys-54–Cys-144, Cys-56–Cys-72, Cys-71–Cys-125, Cys-78–Cys-118, Cys-87–Cys-111, and Cys-105–Cys-116. Residues Tyr-55, Gly-57, and Gly-59 each coordinate Ca(2+). The active site involves His-75. A Ca(2+)-binding site is contributed by Asp-76. Asp-119 is a catalytic residue.

This sequence belongs to the phospholipase A2 family. Group I subfamily. D49 sub-subfamily. Ca(2+) serves as cofactor. In terms of tissue distribution, expressed by the venom gland.

It localises to the secreted. It catalyses the reaction a 1,2-diacyl-sn-glycero-3-phosphocholine + H2O = a 1-acyl-sn-glycero-3-phosphocholine + a fatty acid + H(+). Functionally, PLA2 catalyzes the calcium-dependent hydrolysis of the 2-acyl groups in 3-sn-phosphoglycerides. The sequence is that of Basic phospholipase A2 cL038 from Laticauda semifasciata (Black-banded sea krait).